Reading from the N-terminus, the 296-residue chain is D-alanine--D-alanine ligase (296 aa).

Positions 103–293 (KEILMHHRMP…FDSFVKRIIE (191 aa)) constitute an ATP-grasp domain. 129 to 180 (ISFPVAVKPSSGGSSIATFKVKSIQELKHAYEEASKYGEVMIEQWVTGKEIT) serves as a coordination point for ATP. 3 residues coordinate Mg(2+): D247, E260, and N262.

The protein belongs to the D-alanine--D-alanine ligase family. It depends on Mg(2+) as a cofactor. Mn(2+) is required as a cofactor.

It localises to the cytoplasm. The catalysed reaction is 2 D-alanine + ATP = D-alanyl-D-alanine + ADP + phosphate + H(+). Its pathway is cell wall biogenesis; peptidoglycan biosynthesis. Its function is as follows. Cell wall formation. The chain is D-alanine--D-alanine ligase from Francisella tularensis subsp. tularensis (strain FSC 198).